Here is a 100-residue protein sequence, read N- to C-terminus: MTGYEPFKFFSIRMSSINSPSVIFKTIKTFNPGKTEEYRAKKAYVQDKGYLRQKRPCPFYYRIPTCTASKYSIGCASSKKLTYTRTKFKFNLVTQRENSL.

This is an uncharacterized protein from Saccharomyces cerevisiae (strain ATCC 204508 / S288c) (Baker's yeast).